A 626-amino-acid chain; its full sequence is Two-component response regulator ORR24 (626 aa).

Positions 1–22 (MTVEERQGRVGGHGVSGGGGGR) are disordered. A compositionally biased stretch (gly residues) spans 9-22 (RVGGHGVSGGGGGR). Positions 30–145 (RVLAVDDDPT…QLRTIWQHVI (116 aa)) constitute a Response regulatory domain. Residue Asp-81 is modified to 4-aspartylphosphate. Basic and acidic residues predominate over residues 151–162 (DAKNRGNDDDAG). 2 disordered regions span residues 151-215 (DAKN…KKPR) and 400-440 (LQPL…RTTN). The segment covering 191–202 (NGDDGDDSDENS) has biased composition (acidic residues). The segment at residues 210-269 (TQKKPRVVWSVELHRKFVAAVNQLGIEKAVPKKILDLMNVENITRENVASHLQKYRLYLK) is a DNA-binding region (myb-like GARP). Positions 400–421 (LQPLESSSQQHLSRVHSSSADP) are enriched in polar residues.

This sequence belongs to the ARR family. Type-B subfamily. Post-translationally, two-component system major event consists of a His-to-Asp phosphorelay between a sensor histidine kinase (HK) and a response regulator (RR). In plants, the His-to-Asp phosphorelay involves an additional intermediate named Histidine-containing phosphotransfer protein (HPt). This multistep phosphorelay consists of a His-Asp-His-Asp sequential transfer of a phosphate group between first a His and an Asp of the HK protein, followed by the transfer to a conserved His of the HPt protein and finally the transfer to an Asp in the receiver domain of the RR protein.

The protein resides in the nucleus. Its function is as follows. Transcriptional activator that binds specific DNA sequence. Functions as a response regulator involved in His-to-Asp phosphorelay signal transduction system. Phosphorylation of the Asp residue in the receiver domain activates the ability of the protein to promote the transcription of target genes. May directly activate some type-A response regulators in response to cytokinins. The polypeptide is Two-component response regulator ORR24 (Oryza sativa subsp. indica (Rice)).